The chain runs to 521 residues: Peroxisomal membrane protein PEX23 (521 aa).

The segment at Met1 to Glu26 is disordered. 2 N-linked (GlcNAc...) asparagine glycosylation sites follow: Asn23 and Asn53. 2 helical membrane passes run Ser111–Phe128 and Ile133–Phe150. N-linked (GlcNAc...) asparagine glycosylation occurs at Asn189. The chain crosses the membrane as a helical span at residues Leu198–Phe217. Residue Asn279 is glycosylated (N-linked (GlcNAc...) asparagine). The interval Val425–Val446 is disordered. Positions Asp429–Val446 are enriched in polar residues. Asn463 and Asn467 each carry an N-linked (GlcNAc...) asparagine glycan. The disordered stretch occupies residues Ser465–Lys486.

This sequence belongs to the PEX28-32 family. PEX32 subfamily.

It localises to the endoplasmic reticulum membrane. Functionally, with PEX29, contributes to the formation of endoplasmic reticulum-mitochondria junctions which are important for mitochondrial function. Involved in lipid dropplets formation. This is Peroxisomal membrane protein PEX23 from Ogataea parapolymorpha (strain ATCC 26012 / BCRC 20466 / JCM 22074 / NRRL Y-7560 / DL-1) (Yeast).